The chain runs to 93 residues: Probable Fe(2+)-trafficking protein (93 aa).

Belongs to the Fe(2+)-trafficking protein family.

Its function is as follows. Could be a mediator in iron transactions between iron acquisition and iron-requiring processes, such as synthesis and/or repair of Fe-S clusters in biosynthetic enzymes. This Polaromonas naphthalenivorans (strain CJ2) protein is Probable Fe(2+)-trafficking protein.